Here is a 219-residue protein sequence, read N- to C-terminus: OVARIAN TUMOR DOMAIN-containing deubiquitinating enzyme 12 (219 aa).

Residues 79–203 (LCELKVSGDG…EVHYNSLYDI (125 aa)) enclose the OTU domain. Residue D87 is part of the active site. C90 serves as the catalytic Nucleophile. The active site involves H196.

It belongs to the peptidase C85 family.

The catalysed reaction is Thiol-dependent hydrolysis of ester, thioester, amide, peptide and isopeptide bonds formed by the C-terminal Gly of ubiquitin (a 76-residue protein attached to proteins as an intracellular targeting signal).. Its function is as follows. Hydrolase that can remove conjugated ubiquitin from proteins in vitro and may therefore play an important regulatory role at the level of protein turnover by preventing degradation. Inactive cysteine protease. This chain is OVARIAN TUMOR DOMAIN-containing deubiquitinating enzyme 12, found in Arabidopsis thaliana (Mouse-ear cress).